The chain runs to 461 residues: Bifunctional protein GlmU (461 aa).

Residues 1–232 (MNLQIIILAA…SFEVQGINNR (232 aa)) are pyrophosphorylase. Residues 8 to 11 (LAAG), Lys-22, Gln-73, and 78 to 79 (GT) each bind UDP-N-acetyl-alpha-D-glucosamine. Residue Asp-102 participates in Mg(2+) binding. Residues Gly-142, Glu-157, and Asn-230 each contribute to the UDP-N-acetyl-alpha-D-glucosamine site. Asn-230 lines the Mg(2+) pocket. Residues 233–253 (QQLQQLERIWQQRAANQLMEK) form a linker region. An N-acetyltransferase region spans residues 254 to 461 (GATLADANRF…WKRPVKRERD (208 aa)). Positions 336 and 354 each coordinate UDP-N-acetyl-alpha-D-glucosamine. His-366 (proton acceptor) is an active-site residue. UDP-N-acetyl-alpha-D-glucosamine-binding residues include Tyr-369 and Asn-380. Acetyl-CoA contacts are provided by residues Ala-383, 389–390 (NY), Ser-408, and Ala-426.

This sequence in the N-terminal section; belongs to the N-acetylglucosamine-1-phosphate uridyltransferase family. The protein in the C-terminal section; belongs to the transferase hexapeptide repeat family. Homotrimer. Mg(2+) is required as a cofactor.

The protein resides in the cytoplasm. It carries out the reaction alpha-D-glucosamine 1-phosphate + acetyl-CoA = N-acetyl-alpha-D-glucosamine 1-phosphate + CoA + H(+). The catalysed reaction is N-acetyl-alpha-D-glucosamine 1-phosphate + UTP + H(+) = UDP-N-acetyl-alpha-D-glucosamine + diphosphate. The protein operates within nucleotide-sugar biosynthesis; UDP-N-acetyl-alpha-D-glucosamine biosynthesis; N-acetyl-alpha-D-glucosamine 1-phosphate from alpha-D-glucosamine 6-phosphate (route II): step 2/2. It participates in nucleotide-sugar biosynthesis; UDP-N-acetyl-alpha-D-glucosamine biosynthesis; UDP-N-acetyl-alpha-D-glucosamine from N-acetyl-alpha-D-glucosamine 1-phosphate: step 1/1. Its pathway is bacterial outer membrane biogenesis; LPS lipid A biosynthesis. Its function is as follows. Catalyzes the last two sequential reactions in the de novo biosynthetic pathway for UDP-N-acetylglucosamine (UDP-GlcNAc). The C-terminal domain catalyzes the transfer of acetyl group from acetyl coenzyme A to glucosamine-1-phosphate (GlcN-1-P) to produce N-acetylglucosamine-1-phosphate (GlcNAc-1-P), which is converted into UDP-GlcNAc by the transfer of uridine 5-monophosphate (from uridine 5-triphosphate), a reaction catalyzed by the N-terminal domain. The protein is Bifunctional protein GlmU of Legionella pneumophila subsp. pneumophila (strain Philadelphia 1 / ATCC 33152 / DSM 7513).